We begin with the raw amino-acid sequence, 178 residues long: Large ribosomal subunit protein bL25 (178 aa).

This sequence belongs to the bacterial ribosomal protein bL25 family. CTC subfamily. Part of the 50S ribosomal subunit; part of the 5S rRNA/L5/L18/L25 subcomplex. Contacts the 5S rRNA. Binds to the 5S rRNA independently of L5 and L18.

Functionally, this is one of the proteins that binds to the 5S RNA in the ribosome where it forms part of the central protuberance. The sequence is that of Large ribosomal subunit protein bL25 from Campylobacter jejuni subsp. jejuni serotype O:23/36 (strain 81-176).